Reading from the N-terminus, the 505-residue chain is Histidine ammonia-lyase (505 aa).

A cross-link (5-imidazolinone (Ala-Gly)) is located at residues 141 to 143; it reads ASG. Ser142 bears the 2,3-didehydroalanine (Ser) mark.

The protein belongs to the PAL/histidase family. Post-translationally, contains an active site 4-methylidene-imidazol-5-one (MIO), which is formed autocatalytically by cyclization and dehydration of residues Ala-Ser-Gly.

It is found in the cytoplasm. It carries out the reaction L-histidine = trans-urocanate + NH4(+). It functions in the pathway amino-acid degradation; L-histidine degradation into L-glutamate; N-formimidoyl-L-glutamate from L-histidine: step 1/3. The protein is Histidine ammonia-lyase of Bacillus anthracis.